The primary structure comprises 86 residues: Large ribosomal subunit protein bL31B (86 aa).

The protein belongs to the bacterial ribosomal protein bL31 family. Type B subfamily. As to quaternary structure, part of the 50S ribosomal subunit.

This chain is Large ribosomal subunit protein bL31B, found in Salmonella paratyphi A (strain ATCC 9150 / SARB42).